The chain runs to 252 residues: Small ribosomal subunit protein uS2 (252 aa).

Residues 231 to 252 (SVESTAQEQVEETAQEETAVEA) form a disordered region. The segment covering 239–252 (QVEETAQEETAVEA) has biased composition (acidic residues).

The protein belongs to the universal ribosomal protein uS2 family.

This chain is Small ribosomal subunit protein uS2, found in Acetivibrio thermocellus (strain ATCC 27405 / DSM 1237 / JCM 9322 / NBRC 103400 / NCIMB 10682 / NRRL B-4536 / VPI 7372) (Clostridium thermocellum).